The chain runs to 525 residues: Bifunctional purine biosynthesis protein PurH (525 aa).

The MGS-like domain maps to 1 to 149 (MSDPVIKRAL…KNHESVTVIT (149 aa)).

This sequence belongs to the PurH family.

The catalysed reaction is (6R)-10-formyltetrahydrofolate + 5-amino-1-(5-phospho-beta-D-ribosyl)imidazole-4-carboxamide = 5-formamido-1-(5-phospho-D-ribosyl)imidazole-4-carboxamide + (6S)-5,6,7,8-tetrahydrofolate. The enzyme catalyses IMP + H2O = 5-formamido-1-(5-phospho-D-ribosyl)imidazole-4-carboxamide. Its pathway is purine metabolism; IMP biosynthesis via de novo pathway; 5-formamido-1-(5-phospho-D-ribosyl)imidazole-4-carboxamide from 5-amino-1-(5-phospho-D-ribosyl)imidazole-4-carboxamide (10-formyl THF route): step 1/1. It functions in the pathway purine metabolism; IMP biosynthesis via de novo pathway; IMP from 5-formamido-1-(5-phospho-D-ribosyl)imidazole-4-carboxamide: step 1/1. This chain is Bifunctional purine biosynthesis protein PurH, found in Chlorobium phaeobacteroides (strain BS1).